The primary structure comprises 402 residues: uncharacterized protein (402 aa).

Transmembrane regions (helical) follow at residues 23–43, 52–72, 90–110, 121–141, 158–178, 180–200, 228–248, 255–275, 282–302, 309–329, 351–371, and 375–395; these read IVSV…PLAV, LGYG…ATLL, VLYG…SVAI, LLVG…AAIG, WNGI…VLLV, WLGL…GFAL, GMGL…ITLY, ANAV…RLLF, LGGF…LLLL, WVGL…FPAF, LFVD…ANLF, and SMFL…VALH.

Belongs to the major facilitator superfamily. YhhS family.

The protein resides in the cell inner membrane. This is an uncharacterized protein from Pseudomonas aeruginosa (strain ATCC 15692 / DSM 22644 / CIP 104116 / JCM 14847 / LMG 12228 / 1C / PRS 101 / PAO1).